Consider the following 369-residue polypeptide: MKIGVFCPIGNNGWLLSENAPQYMPSFELNKKIVQRAEHYGFDFALSMIKLRGFGGKTEFWDHNLETFTLMAGLAAVTSKIKIYATAATLVMPPAIVARMASTIDSISNGRFGLNVVTGWQAPEYSQMGMWPGDEYFAKRYEYLSEYVQILRELWATGQSDFKGEHFQMEDCRVSPQPQAEMKIICAGQSDTGLEFSAQHADYNFVFGKGLNTPTAYAGINDRLKHFTDQTGRDVQTYVLFMVIAAETDAEAMAKWQSYNDGADVEAINWLMNQGGKDTKSGADTNIRQMASSVSPVNINMGTLVGSYEKVAAMLDEIAEIKGTEGILLTFDDFVQGVEDFGERIQPLMTSRQDIVAEYQPVTPLEKSA.

FMN contacts are provided by residues 49 to 50 (IK), N115, E124, 140 to 141 (RY), and S190.

The protein belongs to the NtaA/SnaA/DszA monooxygenase family. RutA subfamily.

It catalyses the reaction uracil + FMNH2 + NADH + O2 = (Z)-3-ureidoacrylate + FMN + NAD(+) + H2O + H(+). The catalysed reaction is thymine + FMNH2 + NADH + O2 = (Z)-2-methylureidoacrylate + FMN + NAD(+) + H2O + H(+). Functionally, catalyzes the pyrimidine ring opening between N-3 and C-4 by an unusual flavin hydroperoxide-catalyzed mechanism, adding oxygen atoms in the process to yield ureidoacrylate peracid, that immediately reacts with FMN forming ureidoacrylate and FMN-N(5)-oxide. The FMN-N(5)-oxide reacts spontaneously with NADH to produce FMN. Requires the flavin reductase RutF to regenerate FMN in vivo. The chain is Pyrimidine monooxygenase RutA from Acinetobacter baylyi (strain ATCC 33305 / BD413 / ADP1).